We begin with the raw amino-acid sequence, 1770 residues long: Transposon Ty2-DR2 Gag-Pol polyprotein (1770 aa).

2 stretches are compositionally biased toward polar residues: residues Met1–Asn39 and Lys49–Thr60. Disordered regions lie at residues Met1–Gly89 and His360–Glu449. Residues Glu295–His397 are RNA-binding. Positions Thr369–Arg381 are enriched in low complexity. 2 stretches are compositionally biased toward polar residues: residues Ile399–Val408 and Glu415–Gln435. Asp457 serves as the catalytic For protease activity; shared with dimeric partner. Residues Asn579–Cys636 form an integrase-type zinc finger-like region. Residues Glu656 to Pro831 enclose the Integrase catalytic domain. Positions 667 and 732 each coordinate Mg(2+). Disordered stretches follow at residues Gly1005–Leu1038, Thr1059–Lys1135, and Ser1171–Pro1222. 2 stretches are compositionally biased toward polar residues: residues Glu1009–Arg1024 and Gln1065–Ser1082. A Bipartite nuclear localization signal motif is present at residues Lys1193–Arg1227. Residues Asn1353–Gln1491 form the Reverse transcriptase Ty1/copia-type domain. Positions 1361, 1442, 1443, 1625, 1667, and 1700 each coordinate Mg(2+). The RNase H Ty1/copia-type domain occupies Asp1625–Lys1767.

As to quaternary structure, the capsid protein forms a homotrimer, from which the VLPs are assembled. The protease is a homodimer, whose active site consists of two apposed aspartic acid residues. Post-translationally, initially, virus-like particles (VLPs) are composed of the structural unprocessed proteins Gag and Gag-Pol, and also contain the host initiator methionine tRNA (tRNA(i)-Met) which serves as a primer for minus-strand DNA synthesis, and a dimer of genomic Ty RNA. Processing of the polyproteins occurs within the particle and proceeds by an ordered pathway, called maturation. First, the protease (PR) is released by autocatalytic cleavage of the Gag-Pol polyprotein, and this cleavage is a prerequisite for subsequent processing at the remaining sites to release the mature structural and catalytic proteins. Maturation takes place prior to the RT reaction and is required to produce transposition-competent VLPs.

It localises to the cytoplasm. Its subcellular location is the nucleus. The catalysed reaction is DNA(n) + a 2'-deoxyribonucleoside 5'-triphosphate = DNA(n+1) + diphosphate. It catalyses the reaction Endonucleolytic cleavage to 5'-phosphomonoester.. Functionally, capsid protein (CA) is the structural component of the virus-like particle (VLP), forming the shell that encapsulates the retrotransposons dimeric RNA genome. The particles are assembled from trimer-clustered units and there are holes in the capsid shells that allow for the diffusion of macromolecules. CA also has nucleocapsid-like chaperone activity, promoting primer tRNA(i)-Met annealing to the multipartite primer-binding site (PBS), dimerization of Ty2 RNA and initiation of reverse transcription. In terms of biological role, the aspartyl protease (PR) mediates the proteolytic cleavages of the Gag and Gag-Pol polyproteins after assembly of the VLP. Its function is as follows. Reverse transcriptase/ribonuclease H (RT) is a multifunctional enzyme that catalyzes the conversion of the retro-elements RNA genome into dsDNA within the VLP. The enzyme displays a DNA polymerase activity that can copy either DNA or RNA templates, and a ribonuclease H (RNase H) activity that cleaves the RNA strand of RNA-DNA heteroduplexes during plus-strand synthesis and hydrolyzes RNA primers. The conversion leads to a linear dsDNA copy of the retrotransposon that includes long terminal repeats (LTRs) at both ends. Integrase (IN) targets the VLP to the nucleus, where a subparticle preintegration complex (PIC) containing at least integrase and the newly synthesized dsDNA copy of the retrotransposon must transit the nuclear membrane. Once in the nucleus, integrase performs the integration of the dsDNA into the host genome. This Saccharomyces cerevisiae (strain ATCC 204508 / S288c) (Baker's yeast) protein is Transposon Ty2-DR2 Gag-Pol polyprotein (TY2B-DR2).